The following is a 142-amino-acid chain: Large ribosomal subunit protein uL16 (142 aa).

This sequence belongs to the universal ribosomal protein uL16 family. In terms of assembly, part of the 50S ribosomal subunit.

Functionally, binds 23S rRNA and is also seen to make contacts with the A and possibly P site tRNAs. The sequence is that of Large ribosomal subunit protein uL16 from Fervidobacterium nodosum (strain ATCC 35602 / DSM 5306 / Rt17-B1).